Consider the following 102-residue polypeptide: Large ribosomal subunit protein bL21 (102 aa).

The protein belongs to the bacterial ribosomal protein bL21 family. Part of the 50S ribosomal subunit. Contacts protein L20.

Functionally, this protein binds to 23S rRNA in the presence of protein L20. The sequence is that of Large ribosomal subunit protein bL21 from Shouchella clausii (strain KSM-K16) (Alkalihalobacillus clausii).